The chain runs to 92 residues: Large ribosomal subunit protein eL43y (92 aa).

The C4-type zinc finger occupies 39–60 (CEFCGKYGVKRKAVGIWGCKDC).

This sequence belongs to the eukaryotic ribosomal protein eL43 family.

The chain is Large ribosomal subunit protein eL43y (RPL37AC) from Arabidopsis thaliana (Mouse-ear cress).